A 555-amino-acid chain; its full sequence is Gamma-aminobutyric acid receptor subunit alpha-4 (555 aa).

A signal peptide spans 1 to 35 (MVSAKKVPAIAMSFGVSFALLHFLCLAACLNESPG). At 36-259 (QNQKEEKLCP…FHLRRKMGYF (224 aa)) the chain is on the extracellular side. A glycan (N-linked (GlcNAc...) asparagine) is linked at N47. R100 lines the 4-aminobutanoate pocket. Residues N144 and N157 are each glycosylated (N-linked (GlcNAc...) asparagine). T163 provides a ligand contact to 4-aminobutanoate. A disulfide bridge links C172 with C186. The helical transmembrane segment at 260–280 (MIQTYIPCIMTVILSQVSFWI) threads the bilayer. Residues 281–284 (NKES) are Cytoplasmic-facing. The chain crosses the membrane as a helical span at residues 285–305 (VPARTVFGITTVLTMTTLSIS). Residues 306–318 (ARHSLPKVSYATA) lie on the Extracellular side of the membrane. A helical membrane pass occupies residues 319-341 (MDWFIAVCFAFVFSALIEFAAVN). Over 342–518 (YFTNVQMEKA…PPPSGSGTSK (177 aa)) the chain is Cytoplasmic. Disordered regions lie at residues 354–435 (KTSK…SPNP) and 495–516 (GTSG…GSGT). The segment covering 410–421 (SSKSSTVVQGSS) has biased composition (low complexity). Positions 422–435 (EATPQSYLASSPNP) are enriched in polar residues. Residues 519–545 (IDKYARILFPVTFGAFNMVYWVVYLSK) form a helical membrane-spanning segment. The Extracellular segment spans residues 546 to 555 (DTMEKSESLM).

The protein belongs to the ligand-gated ion channel (TC 1.A.9) family. Gamma-aminobutyric acid receptor (TC 1.A.9.5) subfamily. GABRA4 sub-subfamily. Heteropentamer, formed by a combination of alpha (GABRA1-6), beta (GABRB1-3), gamma (GABRG1-3), delta (GABRD), epsilon (GABRE), rho (GABRR1-3), pi (GABRP) and theta (GABRQ) chains, each subunit exhibiting distinct physiological and pharmacological properties. Expressed in the brain.

Its subcellular location is the cell membrane. The protein resides in the postsynaptic cell membrane. It catalyses the reaction chloride(in) = chloride(out). Potentiated by histamine. Functionally, alpha subunit of the heteropentameric ligand-gated chloride channel gated by gamma-aminobutyric acid (GABA), a major inhibitory neurotransmitter in the brain. GABA-gated chloride channels, also named GABA(A) receptors (GABAAR), consist of five subunits arranged around a central pore and contain GABA active binding site(s) located at the alpha and beta subunit interface(s). When activated by GABA, GABAARs selectively allow the flow of chloride anions across the cell membrane down their electrochemical gradient. GABAARs containing alpha-4 are predominantly extrasynaptic, contributing to tonic inhibition in dentate granule cells and thalamic relay neurons. Extrasynaptic alpha-4-containing GABAARs control levels of excitability and network activity. GABAARs containing alpha-4 are often found with the delta or gamma-2 subunits, in combination with beta subunits. GABAAR containing alpha-4-beta-3-delta subunits can simultaneously bind GABA and histamine where histamine binds at the interface of two neighboring beta subunits, which may be involved in the regulation of sleep and wakefulness. The chain is Gamma-aminobutyric acid receptor subunit alpha-4 (GABRA4) from Bos taurus (Bovine).